A 670-amino-acid polypeptide reads, in one-letter code: UvrABC system protein B (670 aa).

The Helicase ATP-binding domain maps to 25–412 (EGLEAGLSHQ…AGRVIEQVVR (388 aa)). 38-45 (GVTGSGKT) serves as a coordination point for ATP. The short motif at 91 to 114 (YYDYYQPEAYVPSSDTYIEKDSSI) is the Beta-hairpin element. Positions 429–582 (QVDDLLSQIR…QIAFNEAHGI (154 aa)) constitute a Helicase C-terminal domain. A UVR domain is found at 631-666 (SKRIRQLEEKMYQLARDLEFEAAAQLRDEIQTLRER).

It belongs to the UvrB family. Forms a heterotetramer with UvrA during the search for lesions. Interacts with UvrC in an incision complex.

It localises to the cytoplasm. In terms of biological role, the UvrABC repair system catalyzes the recognition and processing of DNA lesions. A damage recognition complex composed of 2 UvrA and 2 UvrB subunits scans DNA for abnormalities. Upon binding of the UvrA(2)B(2) complex to a putative damaged site, the DNA wraps around one UvrB monomer. DNA wrap is dependent on ATP binding by UvrB and probably causes local melting of the DNA helix, facilitating insertion of UvrB beta-hairpin between the DNA strands. Then UvrB probes one DNA strand for the presence of a lesion. If a lesion is found the UvrA subunits dissociate and the UvrB-DNA preincision complex is formed. This complex is subsequently bound by UvrC and the second UvrB is released. If no lesion is found, the DNA wraps around the other UvrB subunit that will check the other stand for damage. The polypeptide is UvrABC system protein B (Pseudomonas aeruginosa (strain ATCC 15692 / DSM 22644 / CIP 104116 / JCM 14847 / LMG 12228 / 1C / PRS 101 / PAO1)).